The sequence spans 561 residues: Oxygen-dependent choline dehydrogenase (561 aa).

Asp-7–Glu-36 serves as a coordination point for FAD. His-474 serves as the catalytic Proton acceptor.

The protein belongs to the GMC oxidoreductase family. FAD serves as cofactor.

The catalysed reaction is choline + A = betaine aldehyde + AH2. It carries out the reaction betaine aldehyde + NAD(+) + H2O = glycine betaine + NADH + 2 H(+). Its pathway is amine and polyamine biosynthesis; betaine biosynthesis via choline pathway; betaine aldehyde from choline (cytochrome c reductase route): step 1/1. Involved in the biosynthesis of the osmoprotectant glycine betaine. Catalyzes the oxidation of choline to betaine aldehyde and betaine aldehyde to glycine betaine at the same rate. The chain is Oxygen-dependent choline dehydrogenase from Paraburkholderia phytofirmans (strain DSM 17436 / LMG 22146 / PsJN) (Burkholderia phytofirmans).